Reading from the N-terminus, the 116-residue chain is NAD(P)H-quinone oxidoreductase subunit M (116 aa).

It belongs to the complex I NdhM subunit family. NDH-1 can be composed of about 15 different subunits; different subcomplexes with different compositions have been identified which probably have different functions.

It localises to the cellular thylakoid membrane. It catalyses the reaction a plastoquinone + NADH + (n+1) H(+)(in) = a plastoquinol + NAD(+) + n H(+)(out). It carries out the reaction a plastoquinone + NADPH + (n+1) H(+)(in) = a plastoquinol + NADP(+) + n H(+)(out). Its function is as follows. NDH-1 shuttles electrons from an unknown electron donor, via FMN and iron-sulfur (Fe-S) centers, to quinones in the respiratory and/or the photosynthetic chain. The immediate electron acceptor for the enzyme in this species is believed to be plastoquinone. Couples the redox reaction to proton translocation, and thus conserves the redox energy in a proton gradient. Cyanobacterial NDH-1 also plays a role in inorganic carbon-concentration. The protein is NAD(P)H-quinone oxidoreductase subunit M of Synechococcus sp. (strain RCC307).